Reading from the N-terminus, the 205-residue chain is Suppressor of IKBKE 1 (205 aa).

2 coiled-coil regions span residues 4–32 (TIDK…LIDQ) and 154–192 (KAIQ…ESLR).

Belongs to the SIKE family. In terms of assembly, interacts with IKBKE and TBK1 via its coiled coil region. Interaction with TBK1 is disrupted upon viral infection or TLR3 stimulation. Interacts with CDC42BPB. Associates with the STRIPAK core complex composed of PP2A catalytic and scaffolding subunits, the striatins (PP2A regulatory subunits), the striatin-associated proteins MOB4, STRIP1 and STRIP2, PDCD10 and members of the STE20 kinases, such as STK24 and STK26.

It localises to the cytoplasm. Functionally, suppressor of IKK-epsilon. Associates with the striatin-interacting phosphatase and kinase (STRIPAK) core complex, forming the extended (SIKE1:SLMAP)STRIPAK complex. The (SIKE1:SLMAP)STRIPAK complex dephosphorylates STK3 leading to the inhibition of Hippo signaling and the control of cell growth. The sequence is that of Suppressor of IKBKE 1 (sike1) from Xenopus laevis (African clawed frog).